Here is a 286-residue protein sequence, read N- to C-terminus: Beta-lactamase SHV-8 (286 aa).

The N-terminal stretch at 1–21 is a signal peptide; the sequence is MRYIRLCIISLLATLPLAVHA. Residue Ser-66 is the Acyl-ester intermediate of the active site. Cysteines 73 and 119 form a disulfide. Glu-164 acts as the Proton acceptor in catalysis. 230-232 contacts substrate; the sequence is KTG.

The protein belongs to the class-A beta-lactamase family.

It carries out the reaction a beta-lactam + H2O = a substituted beta-amino acid. In terms of biological role, SHV enzymes hydrolyze broad spectrum cephalosporins notably cefotaxime and ceftazidime. This is Beta-lactamase SHV-8 (bla) from Escherichia coli.